Reading from the N-terminus, the 141-residue chain is Hemoglobin subunit alpha (141 aa).

Residues 1-141 form the Globin domain; sequence VLSSADKANI…VSTVLTSKYR (141 aa). A Phosphoserine modification is found at serine 3. 2 positions are modified to N6-succinyllysine: lysine 7 and lysine 11. Lysine 16 bears the N6-acetyllysine; alternate mark. Position 16 is an N6-succinyllysine; alternate (lysine 16). Residue tyrosine 24 is modified to Phosphotyrosine. An N6-succinyllysine modification is found at lysine 40. Position 49 is a phosphoserine (serine 49). Histidine 58 serves as a coordination point for O2. Residue histidine 87 participates in heme b binding. Serine 102 carries the phosphoserine modification. The residue at position 108 (threonine 108) is a Phosphothreonine. Serine 131 bears the Phosphoserine mark. Residues threonine 134 and threonine 137 each carry the phosphothreonine modification. Serine 138 is subject to Phosphoserine.

Belongs to the globin family. In terms of assembly, heterotetramer of two alpha chains and two beta chains. As to expression, red blood cells.

Functionally, involved in oxygen transport from the lung to the various peripheral tissues. Its function is as follows. Hemopressin acts as an antagonist peptide of the cannabinoid receptor CNR1. Hemopressin-binding efficiently blocks cannabinoid receptor CNR1 and subsequent signaling. The polypeptide is Hemoglobin subunit alpha (HBA) (Crocuta crocuta (Spotted hyena)).